Here is a 735-residue protein sequence, read N- to C-terminus: F-box and leucine-rich repeat protein 13 (735 aa).

Positions 152–198 constitute an F-box domain; it reads KCDISLLPERAILQIFFYLSLKDVIICGQVNHAWMLMTQLNSLWNAI. LRR repeat units follow at residues 230-254, 255-280, 281-305, 306-333, 334-359, 360-385, 386-406, 410-435, 436-460, 461-488, 489-514, 515-538, 539-563, 564-589, 590-615, 616-641, and 642-667; these read GCLL…NVSD, CPTF…NLSN, TTIT…SLAY, CRRF…DLSG, CTQI…TIND, MPTL…VFTG, APHI…RKIR, NKRV…YMAD, CKGI…NLAN, CVRI…NLSN, CVRL…SLRN, CEHL…IDLS, GTDI…SVSE, CYRI…DVSY, CSQL…SIAG, CPKI…DISG, and CVLL…KMQY. Residues 682 to 692 show a composition bias toward polar residues; it reads KVQQQEYNTND. Positions 682 to 703 are disordered; the sequence is KVQQQEYNTNDPPRWFGYDREG.

The protein belongs to the DRC6 family. Component of the nexin-dynein regulatory complex (N-DRC). Directly interacts with SKP1 and CUL1. Interacts with TCTE1/DRC5.

It is found in the cytoplasm. Its subcellular location is the cytoskeleton. The protein resides in the flagellum axoneme. The protein localises to the microtubule organizing center. It localises to the centrosome. Its function is as follows. Substrate-recognition component of the SCF (SKP1-CUL1-F-box protein)-type E3 ubiquitin ligase complex. Component of the nexin-dynein regulatory complex (N-DRC), a key regulator of ciliary/flagellar motility which maintains the alignment and integrity of the distal axoneme and regulates microtubule sliding in motile axonemes. Specifically targets CEP192 isoform 3 for ubiquitin-mediated proteolysis and thereby acts as a regulator of microtubule nucleation activity. This Homo sapiens (Human) protein is F-box and leucine-rich repeat protein 13 (FBXL13).